Consider the following 1003-residue polypeptide: MWEKMETKTIVYDLDTSGGLMEQIQALLAPPKTDEAEKRSRKPEKESRRSGRATNHDSCDSCKEGGDLLCCDHCPAAFHLQCCNPPLSEEMLPPGEWMCHRCTVRRKKREQKKELGHVNGLVDKSSKRTTSPSSDTDLLDRPASKTELKAIAHARILERRASRPGTPTSNASTETPTSEHNDVDEDIVDVDEEPVAAEPDYVQPQLRRPFELLIAAAMERNPTQFQLPNELTCTTALPGSSKRRRKEETTGKNVKRTQHELDHNGLVPLPVKVCFTCNRSCRVAPLIQCDYCPLLFHMDCLEPPLTAMPLGRWMCPNHIEHVVLNQKNLTLSNRCQVFDRFQDTISQHVVKVDFLNRIHKKHPPNRRVLQSVKRRSLKVPDAIKSQYQFPPPLIAPAAIRDGELICSGVPEESQTHLLNSEHLATQAEQQEWLCSVVALQCSILKHLSAKQMPSPWDSEQTEKADIKPVIVTDSSITTSLQTADKAPLPSHYPLSCPSAVSTQNSLGCSPPHQPPTLEDISCSSCVEKSKKAPCGTANGPVNTEIKANGPHLYSSPTDSTDPRRLPGANTPLPGLTHRQGWPRPLTPPSAGGLQNHVGIIVKTENATGPSSCPQRSLVPVPSLPPSIPSSCASIENTSTLHRKTVQSQIGPSSTESRPLGSPPNATRVLTPPQAAGDSILATGANQRFCSPAPSSDGKVSPGTLSIGSALTVPSFPANSTAMVDLTNSLRAFMDVNGEIEINMLDEKLIKFLALQRVHQLFPSRVQASPGNVGTHPLASGGHHPEVQRKEVQARAVFCPLLGLGGAVNMCYRTLYIGTGADMDVCLTNYGHCNYVSGKHACIFYDENTKHYELLNYSEHGTTVDNVLYSCDFSEKTPPTPPSSIVAKVQSVIRRRRHQKQDEEPSEEAAMMSSQAQGPQRRPCNCKASSSSLIGGSGAGWEGTALLHHGSYIKLGCLQFVFSITEFATKQPKGDASLLQDGVLAEKLSLKPHQGPVLRSNSVP.

The tract at residues 29-59 (APPKTDEAEKRSRKPEKESRRSGRATNHDSC) is disordered. Basic and acidic residues predominate over residues 32–59 (KTDEAEKRSRKPEKESRRSGRATNHDSC). The PHD-type 1 zinc finger occupies 56-105 (HDSCDSCKEGGDLLCCDHCPAAFHLQCCNPPLSEEMLPPGEWMCHRCTVR). Zn(2+)-binding residues include Cys59, Ser61, Cys62, His79, and Cys82. Disordered stretches follow at residues 110–183 (EQKK…HNDV) and 234–255 (TTALPGSSKRRRKEETTGKNVK). Phosphoserine occurs at positions 131 and 134. Residues 138–161 (LLDRPASKTELKAIAHARILERRA) are compositionally biased toward basic and acidic residues. Positions 165–178 (GTPTSNASTETPTS) are enriched in polar residues. Residues 202 to 241 (VQPQLRRPFELLIAAAMERNPTQFQLPNELTCTTALPGSS) form an SIN3 interacting domain 1 region. Residues 271 to 321 (VKVCFTCNRSCRVAPLIQCDYCPLLFHMDCLEPPLTAMPLGRWMCPNHIEH) form a PHD-type 2; atypical zinc finger. The Zn(2+) site is built by Cys274, Cys277, Cys289, Cys292, His297, Cys300, Cys315, and His318. An SIN3 interacting domain 2 region spans residues 328-364 (NLTLSNRCQVFDRFQDTISQHVVKVDFLNRIHKKHPP). A Glycyl lysine isopeptide (Lys-Gly) (interchain with G-Cter in SUMO2) cross-link involves residue Lys467. Disordered regions lie at residues 531–583 (KAPC…GWPR) and 641–671 (HRKTVQSQIGPSSTESRPLGSPPNATRVLTP). Position 555 is a phosphoserine (Ser555). 2 positions are modified to phosphothreonine: Thr557 and Thr570. A compositionally biased stretch (polar residues) spans 641-656 (HRKTVQSQIGPSSTES). Thr670 bears the Phosphothreonine mark. Residues 814-868 (LYIGTGADMDVCLTNYGHCNYVSGKHACIFYDENTKHYELLNYSEHGTTVDNVLY) enclose the FHA domain. A disordered region spans residues 894 to 922 (RRRHQKQDEEPSEEAAMMSSQAQGPQRRP). Lys899 participates in a covalent cross-link: Glycyl lysine isopeptide (Lys-Gly) (interchain with G-Cter in SUMO2). Low complexity predominate over residues 907–916 (EAAMMSSQAQ). Residues Lys972, Lys986, and Lys990 each participate in a glycyl lysine isopeptide (Lys-Gly) (interchain with G-Cter in SUMO2) cross-link.

In terms of assembly, component of SIN3 complexes. Interacts with SIN3A in a complex composed of HDAC1, SAP30 and SIN3A. Component of the SIN3B complex, which includes SIN3B, HDAC2 or HDAC1, PHF12 and MORF4L1; interacts directly with all subunits. Interacts with TLE5. In terms of tissue distribution, expressed mainly in heart, brain, lung, liver and testis.

The protein localises to the nucleus. Functionally, transcriptional repressor acting as key scaffolding subunit of SIN3 complexes which contributes to complex assembly by contacting each core subunit domain, stabilizes the complex and constitutes the substrate receptor by recruiting the H3 histone tail. SIN3 complexes are composed of a SIN3 scaffold subunit, one catalytic core (HDAC1 or HDAC2) and 2 chromatin targeting modules. SIN3B complex represses transcription and counteracts the histone acetyltransferase activity of EP300 through the recognition H3K27ac marks by PHF12 and the activity of the histone deacetylase HDAC2. SIN3B complex is recruited downstream of the constitutively active genes transcriptional start sites through interaction with histones and mitigates histone acetylation and RNA polymerase II progression within transcribed regions contributing to the regulation of transcription. May also repress transcription in a SIN3A-independent manner through recruitment of functional TLE5 complexes to DNA. May also play a role in ribosomal biogenesis. The sequence is that of PHD finger protein 12 from Mus musculus (Mouse).